The primary structure comprises 224 residues: Germin-like protein 8-9 (224 aa).

Residues 1–22 (MASPSFCLFAALLALVSWQAIA) form the signal peptide. The cysteines at positions 32 and 47 are disulfide-linked. Residues 62-212 (AMLDTPRKTN…AFQVGKGTID (151 aa)) form the Cupin type-1 domain. Residue N76 is glycosylated (N-linked (GlcNAc...) asparagine). Residues H109, H111, and E116 each contribute to the Mn(2+) site. Residue N135 is glycosylated (N-linked (GlcNAc...) asparagine). H157 contacts Mn(2+).

The protein belongs to the germin family. Oligomer (believed to be a pentamer but probably hexamer).

Its subcellular location is the secreted. The protein resides in the extracellular space. The protein localises to the apoplast. Functionally, plays a role in broad-spectrum disease resistance. Probably has no oxalate oxidase activity even if the active site is conserved. This Oryza sativa subsp. japonica (Rice) protein is Germin-like protein 8-9.